A 644-amino-acid polypeptide reads, in one-letter code: Threonine--tRNA ligase (644 aa).

Residues 1–62 (MSFSVTLPDG…DSDVEIAIIT (62 aa)) enclose the TGS domain. The tract at residues 240–538 (DHRTIGRDLD…LTEIYKGAFP (299 aa)) is catalytic. Residues Cys334, His385, and His515 each coordinate Zn(2+).

It belongs to the class-II aminoacyl-tRNA synthetase family. In terms of assembly, homodimer. Requires Zn(2+) as cofactor.

It is found in the cytoplasm. The catalysed reaction is tRNA(Thr) + L-threonine + ATP = L-threonyl-tRNA(Thr) + AMP + diphosphate + H(+). Functionally, catalyzes the attachment of threonine to tRNA(Thr) in a two-step reaction: L-threonine is first activated by ATP to form Thr-AMP and then transferred to the acceptor end of tRNA(Thr). Also edits incorrectly charged L-seryl-tRNA(Thr). The chain is Threonine--tRNA ligase from Lactobacillus acidophilus (strain ATCC 700396 / NCK56 / N2 / NCFM).